We begin with the raw amino-acid sequence, 554 residues long: MASSQVGDMVNGNAEPTRHLAKFPPSLWGDRFTSFTLDKQLWDKYGNEIEVLKEQVRSMVVAGGRKAAEQINLINVLERLGVSYHFEKEIEEQLEQLFAKFEDNEDYDLFTIALHFRIFRQHGYKMSCDVFNKFRDSNGEFKETVSNDVQGMLSLYEATYLKIRGEGFLDEAHAFTIAQLESLVGGPHLSSDLSEQVMHALKQSIHRGFPRLEAKHFISFYEKDASRNETLLRLAKLDFNQLQLSHREELCHIFRWWKELDLISKVPYARDRAVECFFWSTCAYYEPQHSVGRAVLTKIMLLLSVTDDTYDAYGTYDELKLYTNAVQRWDVSAMDELPDYMKALYRALLNVYDEVERDLAKQGRDYGVHHSKEAFKEIVRSYEIEAEWFKEGYVASFEEYMKNALVTSTGRLHTTSCFMGLEADVATTEAFEWILTKPKMVAASGAIGRLVDDVMSHDEEQERGHVATGLDCYMKQHGVSKQEAIVELYKMIENAWRDINEEMLKPTAISMKLLIRVLNLSRISDVVYKYVDGYTHPEIIKDHVISLFEDPIPM.

Residues 288–292 (QHSVG) carry the DDXXD motif motif. Positions 307, 311, 452, 456, and 460 each coordinate Mg(2+).

Belongs to the terpene synthase family. Mg(2+) serves as cofactor.

The catalysed reaction is (2E,6E)-farnesyl diphosphate + H2O = valerianol + diphosphate. It participates in secondary metabolite biosynthesis; terpenoid biosynthesis. Functionally, terpene synthase that catalyzes the biosynthesis of the terpene valerianol. In Camellia sinensis (Tea plant), this protein is Valerianol synthase TPS8.